Reading from the N-terminus, the 115-residue chain is MITPPDVFKSLSDETRARATLLIASLGELCVCELMCALNDSQPKISRHLAQLRSNGMLLDRRQGQWVYYRLNPELPSWVHEMLQVTLQANSQWLADNALRLKNMDGRPVRDSVCC.

The HTH arsR-type domain occupies 1 to 90 (MITPPDVFKS…EMLQVTLQAN (90 aa)). Arsenite-binding residues include C30 and C32. The H-T-H motif DNA-binding region spans 31-54 (VCELMCALNDSQPKISRHLAQLRS).

Homodimer.

It localises to the cytoplasm. Its function is as follows. Binds arsenite and regulates the expression of arsenic efflux pumps. In vitro, also binds antimony and bismuth, but not arsenate. This is Arsenic resistance transcriptional regulator ArsR2 from Pseudomonas putida (strain ATCC 47054 / DSM 6125 / CFBP 8728 / NCIMB 11950 / KT2440).